Consider the following 425-residue polypeptide: MLITSIEAHEILDSRGNPTVEAQVALENGTTGSAIVPSGASTGEKEAVELRDSDPKRYGGKGVLSAVANVNDSIAPEIIGMEVTDQRSIDRKMIEIDGTANKATLGANAILAVSMAVARTAALSLGLPLYRYLGGTNASLLPVPCMNVINGGKHADNTVDFQEFMIAPHNAPNFAEALRMGAETFHALKSILRGKGYSTGVGDEGGFAPDLKSNEEAVEVILLAIEKAGYRPGEDISICLDPATSEMWKDGKYLFFKSDQSTKTSEEMVDLWASWAGQYPIVSLEDGMGENDWEGWKMLTDRIGATVELVGDDLFCTNAKILAEGIEKGVANSILIKLNQIGSVSETLDTIELAVKHNYKCFVSHRSGETEDTTIADLTVATAAGQIKTGSGCRSERVAKFNQLLRIERQLGEAARFAGKSAFAR.

Positions 31-54 (TGSAIVPSGASTGEKEAVELRDSD) are disordered. Residues 43–54 (GEKEAVELRDSD) are compositionally biased toward basic and acidic residues. Position 162 (glutamine 162) interacts with (2R)-2-phosphoglycerate. Catalysis depends on glutamate 204, which acts as the Proton donor. Residues aspartate 241, glutamate 285, and aspartate 312 each coordinate Mg(2+). (2R)-2-phosphoglycerate contacts are provided by lysine 337, arginine 366, serine 367, and lysine 388. The active-site Proton acceptor is the lysine 337.

Belongs to the enolase family. The cofactor is Mg(2+).

Its subcellular location is the cytoplasm. It localises to the secreted. It is found in the cell surface. It catalyses the reaction (2R)-2-phosphoglycerate = phosphoenolpyruvate + H2O. Its pathway is carbohydrate degradation; glycolysis; pyruvate from D-glyceraldehyde 3-phosphate: step 4/5. Its function is as follows. Catalyzes the reversible conversion of 2-phosphoglycerate (2-PG) into phosphoenolpyruvate (PEP). It is essential for the degradation of carbohydrates via glycolysis. The polypeptide is Enolase (Gloeobacter violaceus (strain ATCC 29082 / PCC 7421)).